The sequence spans 411 residues: Methyl-CpG-binding domain protein 2 (411 aa).

A required for interaction with DHX9 and PRMT5 region spans residues 1 to 149 (MRAHPGGGRC…GPRATESGKR (149 aa)). Residues 1–158 (MRAHPGGGRC…RMDCPALPPG (158 aa)) are disordered. The segment covering 77 to 95 (GRGRGRGRGRGRGRGRGRG) has biased composition (basic residues). Over residues 98-121 (PSGGSGLGGDGGGCGGGGSGGGGA) the composition is skewed to gly residues. In terms of domain architecture, MBD spans 145–213 (ESGKRMDCPA…SSFDFRTGKM (69 aa)). Ser181 carries the phosphoserine modification. Residues 214 to 241 (MPSKLQKNKQRLRNDPLNQNKGKPDLNT) form a disordered region. Residues 229-241 (PLNQNKGKPDLNT) are compositionally biased toward polar residues. Position 407 is a phosphoserine (Ser407).

As to quaternary structure, heterodimer with MBD3 (via N-terminus). Component of the MeCP1 complex that contains HDAC1 and HDAC2. Component of the nucleosome remodeling and deacetylase (NuRD) repressor complex, composed of core proteins MTA1, MTA2, MTA3, RBBP4, RBBP7, HDAC1, HDAC2, MBD2, MBD3, and peripherally associated proteins CDK2AP1, CDK2AP2, GATAD2A, GATAD2B, CHD3, CHD4 and CHD5. The exact stoichiometry of the NuRD complex is unknown, and some subunits such as MBD2 and MBD3, GATAD2A and GATAD2B, and CHD3, CHD4 and CHD5 define mutually exclusive NuRD complexes. Interacts with CDK2AP1. Interacts with DHX9. Interacts with DNMT1. Interacts with GATAD2A/p66-alpha. Interacts with GATAD2B/p66-beta. Interacts with GPN1. Interacts with MIZF. Interacts with PRMT5. Interacts with SIN3A. Interacts with SPHK2. In terms of tissue distribution, highly expressed in brain, heart, kidney, stomach, testis and placenta.

Its subcellular location is the nucleus. The protein resides in the chromosome. Functionally, binds CpG islands in promoters where the DNA is methylated at position 5 of cytosine within CpG dinucleotides. Binds hemimethylated DNA as well. Recruits histone deacetylases and DNA methyltransferases to chromatin. Acts as a component of the histone deacetylase NuRD complex which participates in the remodeling of chromatin. Acts as a transcriptional repressor and plays a role in gene silencing. Functions as a scaffold protein, targeting GATAD2A and GATAD2B to chromatin to promote repression. May enhance the activation of some unmethylated cAMP-responsive promoters. This is Methyl-CpG-binding domain protein 2 from Homo sapiens (Human).